The sequence spans 311 residues: Glutaminase (311 aa).

The substrate site is built by S66, N116, E162, N169, Y193, Y245, and V263.

Belongs to the glutaminase family. Homotetramer.

It carries out the reaction L-glutamine + H2O = L-glutamate + NH4(+). The chain is Glutaminase from Rhodopseudomonas palustris (strain ATCC BAA-98 / CGA009).